We begin with the raw amino-acid sequence, 248 residues long: 5'-nucleotidase SurE (248 aa).

4 residues coordinate a divalent metal cation: D8, D9, S39, and N91.

It belongs to the SurE nucleotidase family. Requires a divalent metal cation as cofactor.

The protein localises to the cytoplasm. The enzyme catalyses a ribonucleoside 5'-phosphate + H2O = a ribonucleoside + phosphate. In terms of biological role, nucleotidase that shows phosphatase activity on nucleoside 5'-monophosphates. This chain is 5'-nucleotidase SurE, found in Citrifermentans bemidjiense (strain ATCC BAA-1014 / DSM 16622 / JCM 12645 / Bem) (Geobacter bemidjiensis).